The primary structure comprises 545 residues: T-complex protein 1 subunit alpha (545 aa).

This sequence belongs to the TCP-1 chaperonin family. In terms of assembly, heterooligomeric complex of about 850 to 900 kDa that forms two stacked rings, 12 to 16 nm in diameter.

The protein resides in the cytoplasm. Its function is as follows. Molecular chaperone; assists the folding of proteins upon ATP hydrolysis. Known to play a role, in vitro, in the folding of actin and tubulin. This Schistosoma mansoni (Blood fluke) protein is T-complex protein 1 subunit alpha (TCP-1A).